The following is a 248-amino-acid chain: 2,3-bisphosphoglycerate-dependent phosphoglycerate mutase (248 aa).

Substrate-binding positions include 8-15 (RHGESTWN), 21-22 (TG), Arg-60, 87-90 (ERHY), Lys-98, 114-115 (RR), and 183-184 (GN). The active-site Tele-phosphohistidine intermediate is the His-9. The Proton donor/acceptor role is filled by Glu-87.

The protein belongs to the phosphoglycerate mutase family. BPG-dependent PGAM subfamily. As to quaternary structure, homodimer.

The catalysed reaction is (2R)-2-phosphoglycerate = (2R)-3-phosphoglycerate. It functions in the pathway carbohydrate degradation; glycolysis; pyruvate from D-glyceraldehyde 3-phosphate: step 3/5. Its function is as follows. Catalyzes the interconversion of 2-phosphoglycerate and 3-phosphoglycerate. This chain is 2,3-bisphosphoglycerate-dependent phosphoglycerate mutase, found in Burkholderia lata (strain ATCC 17760 / DSM 23089 / LMG 22485 / NCIMB 9086 / R18194 / 383).